The sequence spans 616 residues: UPF0329 protein ECU02_1540 (616 aa).

Basic and acidic residues-rich tracts occupy residues 350–359 and 369–381; these read EREKREESKG and GAGE…KEED. The tract at residues 350 to 427 is disordered; that stretch reads EREKREESKG…RKGDGHHYKI (78 aa). Residues 382–396 are compositionally biased toward acidic residues; the sequence is GKEEEGVEAEEEESA. Residues 408-427 show a composition bias toward basic residues; sequence ARRKKSLKGKRKGDGHHYKI.

Belongs to the UPF0329 family.

The sequence is that of UPF0329 protein ECU02_1540 from Encephalitozoon cuniculi (strain GB-M1) (Microsporidian parasite).